Here is a 523-residue protein sequence, read N- to C-terminus: Transcription factor MYB120 (523 aa).

2 HTH myb-type domains span residues 23–75 (GVIL…ANHL) and 76–130 (RPNL…KRLL). DNA-binding regions (H-T-H motif) lie at residues 51 to 75 (WNAV…ANHL) and 103 to 126 (WARM…NTRL). 4 disordered regions span residues 140-254 (DIIP…YPTL), 332-373 (QTAT…SHYT), 396-426 (QIPQ…GAHR), and 444-470 (LASG…NNTN). The span at 147 to 167 (LHPHPHHQQQQQHNHHHHHHQ) shows a compositional bias: basic residues. A compositionally biased stretch (polar residues) spans 175–185 (MYFQPQSSQRN). 3 stretches are compositionally biased toward low complexity: residues 202–212 (SSSSFTFHTTT), 223–232 (TPNTPSQLSS), and 341–368 (NPYS…PSFL). Polar residues predominate over residues 396 to 410 (QIPQIDGFNNVNNFT).

In terms of tissue distribution, expressed in pollen grains and pollen tube. Mostly expressed in mature pollen grains, and, to a lower extent, in inflorescences and siliques.

It is found in the nucleus. Functionally, transcription activator. Binds to 5'-CAACTGTC-3' and/or 5'-TAACAAA-3' motif in target gene promoter to promote their expression. Together with MYB97 and MYB101, functions as a male factor that controls pollen tube-synergid interaction in fertilization. Required for pollen tube growth arrest and sperm cell release in the female gametophyte, probably via the regulation of pollen tube-specific gene expression. The chain is Transcription factor MYB120 from Arabidopsis thaliana (Mouse-ear cress).